The primary structure comprises 483 residues: Kynureninase 1 (483 aa).

Pyridoxal 5'-phosphate-binding positions include leucine 147, threonine 148, 175-178 (FPSD), serine 232, aspartate 261, histidine 264, and tyrosine 286. Lysine 287 is modified (N6-(pyridoxal phosphate)lysine). The pyridoxal 5'-phosphate site is built by tryptophan 326 and asparagine 354.

It belongs to the kynureninase family. Homodimer. Requires pyridoxal 5'-phosphate as cofactor.

It localises to the cytoplasm. It carries out the reaction L-kynurenine + H2O = anthranilate + L-alanine + H(+). The catalysed reaction is 3-hydroxy-L-kynurenine + H2O = 3-hydroxyanthranilate + L-alanine + H(+). It functions in the pathway amino-acid degradation; L-kynurenine degradation; L-alanine and anthranilate from L-kynurenine: step 1/1. It participates in cofactor biosynthesis; NAD(+) biosynthesis; quinolinate from L-kynurenine: step 2/3. In terms of biological role, catalyzes the cleavage of L-kynurenine (L-Kyn) and L-3-hydroxykynurenine (L-3OHKyn) into anthranilic acid (AA) and 3-hydroxyanthranilic acid (3-OHAA), respectively. This chain is Kynureninase 1 (bna5-1), found in Aspergillus terreus (strain NIH 2624 / FGSC A1156).